Here is a 330-residue protein sequence, read N- to C-terminus: Olfactory receptor 5P73 (330 aa).

Over 1 to 28 (MAFLEDGNHTTVTEFFLLGLTDDPVLRD) the chain is Extracellular. N8 carries N-linked (GlcNAc...) asparagine glycosylation. Residues 29-49 (ILFIIILCIYLVTVSGNLSTI) form a helical membrane-spanning segment. Over 50–57 (LLIRVSSQ) the chain is Cytoplasmic. A helical transmembrane segment spans residues 58-78 (LHHPMYFILSHLASVDIGISS). The Extracellular segment spans residues 79 to 102 (SVTPNMLATFLVKQNTISYIGCSI). Cysteines 100 and 192 form a disulfide. Residues 103 to 123 (QFTSAAFFGTVECFLLATMAY) form a helical membrane-spanning segment. Topologically, residues 124 to 136 (DRFVAICNPLLYS) are cytoplasmic. The chain crosses the membrane as a helical span at residues 137-157 (TKMSTEACIQLVVGSYIQGFL). At 158–199 (NASFFTLSFFSLFFCGPNRINDFYCDFAPLLELSCSDVTVAV) the chain is on the extracellular side. The helical transmembrane segment at 200 to 220 (VITSISAGFITLTTVFVIAIS) threads the bilayer. The Cytoplasmic segment spans residues 221–240 (YSCIFITIMKMHSTESRCKA). A helical transmembrane segment spans residues 241-261 (FSTCTSHLTAVILFYGTAIFI). Topologically, residues 262-274 (YVMPKSSYSTDQN) are extracellular. Residues 275 to 295 (KVLSIFYTVVIPMLNPLIYSL) traverse the membrane as a helical segment. The Cytoplasmic segment spans residues 296 to 330 (RNNEIKEALKRHLGKKVFSYGNLFCKTHYNHNYPV).

Belongs to the G-protein coupled receptor 1 family.

The protein resides in the cell membrane. Its function is as follows. Potential odorant receptor. The chain is Olfactory receptor 5P73 from Mus musculus (Mouse).